The primary structure comprises 731 residues: Anaphase-promoting complex subunit 2 (731 aa).

The protein belongs to the cullin family. As to quaternary structure, the APC/C is probably composed of at least 12 subunits: apc-2, apc-10, apc-11, cdc-26, emb-1, emb-27, emb-30, mat-1, mat-2, mat-3, such-1 and gfi-3.

It functions in the pathway protein modification; protein ubiquitination. Probable component of the anaphase promoting complex/cyclosome (APC/C), a cell cycle-regulated ubiquitin ligase that controls progression through mitosis and the G1 phase of the cell cycle. The APC/C complex acts by mediating ubiquitination and subsequent degradation of target proteins. Developmental role in early embryogenesis and the metaphase to anaphase transition in meiosis and mitosis. The polypeptide is Anaphase-promoting complex subunit 2 (Caenorhabditis elegans).